We begin with the raw amino-acid sequence, 184 residues long: Acireductone dioxygenase 4 (184 aa).

4 residues coordinate Fe(2+): H86, H88, E92, and H131. Positions 86, 88, 92, and 131 each coordinate Ni(2+).

Belongs to the acireductone dioxygenase (ARD) family. The cofactor is Fe(2+). Requires Ni(2+) as cofactor.

Its subcellular location is the cytoplasm. It is found in the nucleus. The enzyme catalyses 1,2-dihydroxy-5-(methylsulfanyl)pent-1-en-3-one + O2 = 4-methylsulfanyl-2-oxobutanoate + formate + 2 H(+). It catalyses the reaction 1,2-dihydroxy-5-(methylsulfanyl)pent-1-en-3-one + O2 = 3-(methylsulfanyl)propanoate + CO + formate + 2 H(+). The protein operates within amino-acid biosynthesis; L-methionine biosynthesis via salvage pathway; L-methionine from S-methyl-5-thio-alpha-D-ribose 1-phosphate: step 5/6. Functionally, catalyzes 2 different reactions between oxygen and the acireductone 1,2-dihydroxy-3-keto-5-methylthiopentene (DHK-MTPene) depending upon the metal bound in the active site. Fe-containing acireductone dioxygenase (Fe-ARD) produces formate and 2-keto-4-methylthiobutyrate (KMTB), the alpha-ketoacid precursor of methionine in the methionine recycle pathway. Ni-containing acireductone dioxygenase (Ni-ARD) produces methylthiopropionate, carbon monoxide and formate, and does not lie on the methionine recycle pathway. The sequence is that of Acireductone dioxygenase 4 (ARD4) from Oryza sativa subsp. japonica (Rice).